The chain runs to 479 residues: Integrin-linked protein kinase 1 (479 aa).

2 positions are modified to phosphoserine: S17 and S26. Residues 29 to 73 form a disordered region; sequence FTRQSSLDPRRTNMRFSFGRQSSLDPIRRSPDSSKSDDEPHMSVP. Residues 54 to 69 show a composition bias toward basic and acidic residues; it reads PIRRSPDSSKSDDEPH. ANK repeat units lie at residues 77-106 and 110-139; these read DSTM…DVNS and DGRT…NIDA. A Protein kinase domain is found at 194–461; it reads LEVQVRKSDG…EIIIRLDKIV (268 aa). ATP contacts are provided by residues 200–208 and K222; that span reads KSDGISKGA. D319 acts as the Proton acceptor in catalysis.

The protein belongs to the protein kinase superfamily. Ser/Thr protein kinase family. In terms of assembly, interacts with CML9 and POT5/HAK5. Post-translationally, autophosphorylated at Ser-17 and Ser-26.

It is found in the cell membrane. Its subcellular location is the endoplasmic reticulum membrane. The enzyme catalyses L-seryl-[protein] + ATP = O-phospho-L-seryl-[protein] + ADP + H(+). It carries out the reaction L-threonyl-[protein] + ATP = O-phospho-L-threonyl-[protein] + ADP + H(+). With respect to regulation, kinase activity is suppressed by interaction with CML9. In terms of biological role, functions as a link between plant defense pathways, stress responses and potassium homeostasis. Promotes osmotic stress sensitivity, responses to the bacterial-derived pathogen-associated molecular pattern (PAMP) flg22, and resistance to bacterial pathogens. Promotes the accumulation of POT5/HAK5, a potassium transporter that mediates high-affinity uptake during potassium deficiency. The polypeptide is Integrin-linked protein kinase 1 (Arabidopsis thaliana (Mouse-ear cress)).